The following is a 145-amino-acid chain: MKKSARRQSRELATQGLYQWLLSNAAPGEIDAQLRGALGYDKADKELLDAILHGVIREHATLIEALTPSLDRPVDQLSPVERAVLLIATFELTHHVETPYRVIINEAVELAKTFGGSDGYKYVNGVLDKLAAKLRPAETQARRNG.

Belongs to the NusB family.

Functionally, involved in transcription antitermination. Required for transcription of ribosomal RNA (rRNA) genes. Binds specifically to the boxA antiterminator sequence of the ribosomal RNA (rrn) operons. The chain is Transcription antitermination protein NusB from Burkholderia ambifaria (strain MC40-6).